A 356-amino-acid polypeptide reads, in one-letter code: 3-dehydroquinate synthase (356 aa).

NAD(+) contacts are provided by residues 106 to 110 (GVVGD), 130 to 131 (TT), K143, and K152. Zn(2+) contacts are provided by E185, H248, and H265.

This sequence belongs to the sugar phosphate cyclases superfamily. Dehydroquinate synthase family. Co(2+) serves as cofactor. It depends on Zn(2+) as a cofactor. Requires NAD(+) as cofactor.

The protein resides in the cytoplasm. The enzyme catalyses 7-phospho-2-dehydro-3-deoxy-D-arabino-heptonate = 3-dehydroquinate + phosphate. It functions in the pathway metabolic intermediate biosynthesis; chorismate biosynthesis; chorismate from D-erythrose 4-phosphate and phosphoenolpyruvate: step 2/7. In terms of biological role, catalyzes the conversion of 3-deoxy-D-arabino-heptulosonate 7-phosphate (DAHP) to dehydroquinate (DHQ). This Thermoanaerobacter sp. (strain X514) protein is 3-dehydroquinate synthase.